We begin with the raw amino-acid sequence, 205 residues long: Holliday junction branch migration complex subunit RuvA (205 aa).

The interval 1-64 (MIGRLRGTLA…EDAHLLYGFA (64 aa)) is domain I. Residues 65–143 (EKRERELFRE…AWETSPAMFT (79 aa)) are domain II. The segment at 144 to 154 (LVSDGPLPVAS) is flexible linker. A domain III region spans residues 154-205 (SESSAEADAVSALVSLGYKPQEASKAIAAIKDKAGLSSEELIRRSLKGMIAK).

This sequence belongs to the RuvA family. As to quaternary structure, homotetramer. Forms an RuvA(8)-RuvB(12)-Holliday junction (HJ) complex. HJ DNA is sandwiched between 2 RuvA tetramers; dsDNA enters through RuvA and exits via RuvB. An RuvB hexamer assembles on each DNA strand where it exits the tetramer. Each RuvB hexamer is contacted by two RuvA subunits (via domain III) on 2 adjacent RuvB subunits; this complex drives branch migration. In the full resolvosome a probable DNA-RuvA(4)-RuvB(12)-RuvC(2) complex forms which resolves the HJ.

The protein localises to the cytoplasm. The RuvA-RuvB-RuvC complex processes Holliday junction (HJ) DNA during genetic recombination and DNA repair, while the RuvA-RuvB complex plays an important role in the rescue of blocked DNA replication forks via replication fork reversal (RFR). RuvA specifically binds to HJ cruciform DNA, conferring on it an open structure. The RuvB hexamer acts as an ATP-dependent pump, pulling dsDNA into and through the RuvAB complex. HJ branch migration allows RuvC to scan DNA until it finds its consensus sequence, where it cleaves and resolves the cruciform DNA. The polypeptide is Holliday junction branch migration complex subunit RuvA (Pseudomonas entomophila (strain L48)).